The following is a 590-amino-acid chain: DNA mismatch repair protein MutL (590 aa).

The segment covering Pro-335–Ala-351 has biased composition (polar residues). The disordered stretch occupies residues Pro-335 to His-354.

This sequence belongs to the DNA mismatch repair MutL/HexB family.

This protein is involved in the repair of mismatches in DNA. It is required for dam-dependent methyl-directed DNA mismatch repair. May act as a 'molecular matchmaker', a protein that promotes the formation of a stable complex between two or more DNA-binding proteins in an ATP-dependent manner without itself being part of a final effector complex. This is DNA mismatch repair protein MutL from Dichelobacter nodosus (strain VCS1703A).